Reading from the N-terminus, the 193-residue chain is Putative RNA methyltransferase At5g10620 (193 aa).

S-adenosyl-L-methionine-binding positions include L110, G142, and 161–166 (LSSMVL).

It belongs to the RNA methyltransferase RlmH family.

The polypeptide is Putative RNA methyltransferase At5g10620 (Arabidopsis thaliana (Mouse-ear cress)).